The sequence spans 261 residues: MAALLGIVSPVTFTGKHPVNSRSRRRTVVKCSNERRILFNRIAPVYDNLNDLLSLGQHRIWKNMAVSWSGAKKGDYVLDLCCGSGDLAFLLSEKVGSTGKVMGLDFSSEQLAVAATRQSLKARSCYKCIEWIEGDAIDLPFDDCEFDAVTMGYGLRNVVDRLRAMKEMYRVLKPGSRVSILDFNKSNQSVTTFMQGWMIDNVVVPVATVYDLAKEYEYLKYSINGYLTGEELETLALEAGFSSACHYEISGGFMGNLVAMR.

The N-terminal 30 residues, Met-1–Lys-30, are a transit peptide targeting the chloroplast.

Belongs to the class I-like SAM-binding methyltransferase superfamily. MenG/UbiE family.

Its subcellular location is the plastid. The protein localises to the chloroplast. It carries out the reaction demethylphylloquinol + S-adenosyl-L-methionine = phylloquinol + S-adenosyl-L-homocysteine + H(+). Its function is as follows. Involved in the biosynthesis of phylloquinone (vitamin K1). Methyltransferase required for the conversion of 2-phytyl-1,4-beta-naphthoquinol to phylloquinol. This Arabidopsis thaliana (Mouse-ear cress) protein is 2-phytyl-1,4-beta-naphthoquinone methyltransferase, chloroplastic.